The sequence spans 157 residues: Phosphopantetheine adenylyltransferase (157 aa).

Residue S8 participates in substrate binding. ATP contacts are provided by residues 8–9 and H16; that span reads SF. 3 residues coordinate substrate: K40, T72, and R86. Residues 87–89, E97, and 122–128 contribute to the ATP site; these read GLR and HSFLSSS.

It belongs to the bacterial CoaD family. In terms of assembly, homohexamer. It depends on Mg(2+) as a cofactor.

The protein localises to the cytoplasm. It catalyses the reaction (R)-4'-phosphopantetheine + ATP + H(+) = 3'-dephospho-CoA + diphosphate. It participates in cofactor biosynthesis; coenzyme A biosynthesis; CoA from (R)-pantothenate: step 4/5. Reversibly transfers an adenylyl group from ATP to 4'-phosphopantetheine, yielding dephospho-CoA (dPCoA) and pyrophosphate. The sequence is that of Phosphopantetheine adenylyltransferase from Prochlorococcus marinus (strain MIT 9313).